A 159-amino-acid chain; its full sequence is Succinate dehydrogenase assembly factor 2, mitochondrial (159 aa).

The N-terminal 14 residues, 1–14, are a transit peptide targeting the mitochondrion; that stretch reads MASFCLSRCCALRG.

The protein belongs to the SDHAF2 family. As to quaternary structure, interacts with the flavoprotein subunit within the SDH catalytic dimer.

The protein resides in the mitochondrion matrix. Functionally, plays an essential role in the assembly of succinate dehydrogenase (SDH), an enzyme complex (also referred to as respiratory complex II) that is a component of both the tricarboxylic acid (TCA) cycle and the mitochondrial electron transport chain, and which couples the oxidation of succinate to fumarate with the reduction of ubiquinone (coenzyme Q) to ubiquinol. Required for flavinylation (covalent attachment of FAD) of the flavoprotein subunit of the SDH catalytic dimer. The sequence is that of Succinate dehydrogenase assembly factor 2, mitochondrial from Culex quinquefasciatus (Southern house mosquito).